The sequence spans 118 residues: Large ribosomal subunit protein bL20 (118 aa).

Belongs to the bacterial ribosomal protein bL20 family.

Binds directly to 23S ribosomal RNA and is necessary for the in vitro assembly process of the 50S ribosomal subunit. It is not involved in the protein synthesizing functions of that subunit. The protein is Large ribosomal subunit protein bL20 of Pectobacterium atrosepticum (strain SCRI 1043 / ATCC BAA-672) (Erwinia carotovora subsp. atroseptica).